Reading from the N-terminus, the 430-residue chain is MRVPINTITPDTPSAEVIGWAHEIRDLGGLAFLLIRDRTGIIQVTVPKKKVAPEIAETIRAISRESVVRVTGTVKPEGKAPGGRELIPDAIEIVSLSATPLPLDVAEKVPAELDTRLDNRFLDARRPRVSAIFKIRNAVQHATRNFFFENGFIEINTSKIVAAATEGGTELFPIAYFEKEAFLNQSPQLYKQMMMAAGFEKVYEIGPIFRAEEHNTTKHLNEATSIDIEVSFTDHLGVMQTLEDLIRDIYQFVDKTCSDAIADLGLDDFAVPEKGFPRLPYSEAIEIASATCEEDIAYGDDIGTAAERAIGEEMGRLYFIVDWPSSIRPYYAMPYENDPEICKAFDMMHPRMELSSGAQRVHQHDLLVEQIAKKGLNPENFEFYLNPFRFGMPPHAGWGLGAERLVTTMLGLPNVREAVLFPRDRHRVVP.

Glu166 contacts L-aspartate. The tract at residues 188 to 191 is aspartate; the sequence is QLYK. An L-aspartate-binding site is contributed by Arg210. Residues 210-212, 218-220, and Glu353 each bind ATP; these read RAE and KHL. Mg(2+) contacts are provided by Glu353 and Ser356. 2 residues coordinate L-aspartate: Ser356 and Arg360. An ATP-binding site is contributed by 401–404; sequence GAER.

It belongs to the class-II aminoacyl-tRNA synthetase family. Type 2 subfamily. As to quaternary structure, homodimer. It depends on Mg(2+) as a cofactor.

It localises to the cytoplasm. It catalyses the reaction tRNA(Asx) + L-aspartate + ATP = L-aspartyl-tRNA(Asx) + AMP + diphosphate. In terms of biological role, aspartyl-tRNA synthetase with relaxed tRNA specificity since it is able to aspartylate not only its cognate tRNA(Asp) but also tRNA(Asn). Reaction proceeds in two steps: L-aspartate is first activated by ATP to form Asp-AMP and then transferred to the acceptor end of tRNA(Asp/Asn). The sequence is that of Aspartate--tRNA(Asp/Asn) ligase from Methanospirillum hungatei JF-1 (strain ATCC 27890 / DSM 864 / NBRC 100397 / JF-1).